A 165-amino-acid polypeptide reads, in one-letter code: Ribosomal RNA large subunit methyltransferase H (165 aa).

Gly109 serves as a coordination point for S-adenosyl-L-methionine.

Belongs to the RNA methyltransferase RlmH family. As to quaternary structure, homodimer.

The protein resides in the cytoplasm. It carries out the reaction pseudouridine(1915) in 23S rRNA + S-adenosyl-L-methionine = N(3)-methylpseudouridine(1915) in 23S rRNA + S-adenosyl-L-homocysteine + H(+). In terms of biological role, specifically methylates the pseudouridine at position 1915 (m3Psi1915) in 23S rRNA. In Methylorubrum extorquens (strain CM4 / NCIMB 13688) (Methylobacterium extorquens), this protein is Ribosomal RNA large subunit methyltransferase H.